A 279-amino-acid chain; its full sequence is Shikimate dehydrogenase (NADP(+)) (279 aa).

Shikimate-binding positions include 20–22 and threonine 67; that span reads SRS. Residue lysine 71 is the Proton acceptor of the active site. NADP(+) is bound at residue aspartate 83. Shikimate is bound by residues asparagine 92 and aspartate 108. Residues 134 to 138 and leucine 223 each bind NADP(+); that span reads GAGGA. Tyrosine 225 serves as a coordination point for shikimate. An NADP(+)-binding site is contributed by glycine 246.

The protein belongs to the shikimate dehydrogenase family. In terms of assembly, homodimer.

The enzyme catalyses shikimate + NADP(+) = 3-dehydroshikimate + NADPH + H(+). It functions in the pathway metabolic intermediate biosynthesis; chorismate biosynthesis; chorismate from D-erythrose 4-phosphate and phosphoenolpyruvate: step 4/7. Functionally, involved in the biosynthesis of the chorismate, which leads to the biosynthesis of aromatic amino acids. Catalyzes the reversible NADPH linked reduction of 3-dehydroshikimate (DHSA) to yield shikimate (SA). In Cereibacter sphaeroides (strain ATCC 17025 / ATH 2.4.3) (Rhodobacter sphaeroides), this protein is Shikimate dehydrogenase (NADP(+)).